Reading from the N-terminus, the 219-residue chain is MKFFVDSADVAAIAELNALGMVDGVTTNPSLILKSGRNILEVTKEICNLVSGPVSAEVVAAKAEDMIEEGRHLAEIAPNIAVKVPLTWDGLRACKVLSDEGRMVNVTLCFSVNQALLAAKAGATFISPFIGRLDDINLDGMELIADIRQVYDNYDFKTEVLAASVRTPNHVADCARIGADVITAPPAVIKALANHVLTDKGLDMFNADWAKTGQSILLK.

The active-site Schiff-base intermediate with substrate is the K83.

This sequence belongs to the transaldolase family. Type 3B subfamily.

The protein resides in the cytoplasm. The catalysed reaction is D-sedoheptulose 7-phosphate + D-glyceraldehyde 3-phosphate = D-erythrose 4-phosphate + beta-D-fructose 6-phosphate. Its pathway is carbohydrate degradation; pentose phosphate pathway; D-glyceraldehyde 3-phosphate and beta-D-fructose 6-phosphate from D-ribose 5-phosphate and D-xylulose 5-phosphate (non-oxidative stage): step 2/3. Transaldolase is important for the balance of metabolites in the pentose-phosphate pathway. This chain is Probable transaldolase, found in Cereibacter sphaeroides (strain ATCC 17029 / ATH 2.4.9) (Rhodobacter sphaeroides).